A 287-amino-acid chain; its full sequence is Ret finger protein-like 4A (287 aa).

The RING-type; degenerate zinc-finger motif lies at Cys-11–Ser-53. One can recognise a B30.2/SPRY domain in the interval Glu-78–Ser-276.

As to quaternary structure, interacts with PSMB1, UBE2A and CCNB1.

It is found in the cytoplasm. The protein localises to the nucleus. This Homo sapiens (Human) protein is Ret finger protein-like 4A (RFPL4A).